The chain runs to 138 residues: Outer membrane protein assembly factor BamE (138 aa).

Residues 1–42 form the signal peptide; sequence MSHLTMIKTLNLRPFHSASALRKIVITSILGVAVTMSGCSLL.

This sequence belongs to the BamE family. As to quaternary structure, part of the Bam complex.

The protein resides in the cell outer membrane. In terms of biological role, part of the outer membrane protein assembly complex, which is involved in assembly and insertion of beta-barrel proteins into the outer membrane. The sequence is that of Outer membrane protein assembly factor BamE from Psychrobacter arcticus (strain DSM 17307 / VKM B-2377 / 273-4).